Here is a 729-residue protein sequence, read N- to C-terminus: Fatty acid oxidation complex subunit alpha (729 aa).

An enoyl-CoA hydratase/isomerase region spans residues 1 to 189 (MLYKGDTLYV…KIGLIDGIVK (189 aa)). D296 is a binding site for substrate. A 3-hydroxyacyl-CoA dehydrogenase region spans residues 311 to 729 (EMPKQAAVLG…ARPVGALKTA (419 aa)). NAD(+) contacts are provided by residues M324, D343, 400-402 (VVE), K407, and S429. Residue H450 is the For 3-hydroxyacyl-CoA dehydrogenase activity of the active site. N453 lines the NAD(+) pocket. Substrate contacts are provided by N500 and Y660. The tract at residues 708–729 (RHNEPYYPPVEPARPVGALKTA) is disordered.

This sequence in the N-terminal section; belongs to the enoyl-CoA hydratase/isomerase family. The protein in the C-terminal section; belongs to the 3-hydroxyacyl-CoA dehydrogenase family. In terms of assembly, heterotetramer of two alpha chains (FadB) and two beta chains (FadA).

The enzyme catalyses a (3S)-3-hydroxyacyl-CoA + NAD(+) = a 3-oxoacyl-CoA + NADH + H(+). It carries out the reaction a (3S)-3-hydroxyacyl-CoA = a (2E)-enoyl-CoA + H2O. The catalysed reaction is a 4-saturated-(3S)-3-hydroxyacyl-CoA = a (3E)-enoyl-CoA + H2O. It catalyses the reaction (3S)-3-hydroxybutanoyl-CoA = (3R)-3-hydroxybutanoyl-CoA. The enzyme catalyses a (3Z)-enoyl-CoA = a 4-saturated (2E)-enoyl-CoA. It carries out the reaction a (3E)-enoyl-CoA = a 4-saturated (2E)-enoyl-CoA. It participates in lipid metabolism; fatty acid beta-oxidation. In terms of biological role, involved in the aerobic and anaerobic degradation of long-chain fatty acids via beta-oxidation cycle. Catalyzes the formation of 3-oxoacyl-CoA from enoyl-CoA via L-3-hydroxyacyl-CoA. It can also use D-3-hydroxyacyl-CoA and cis-3-enoyl-CoA as substrate. In Enterobacter sp. (strain 638), this protein is Fatty acid oxidation complex subunit alpha.